The following is a 540-amino-acid chain: CUB domain-containing protein 2 (540 aa).

Residues 1-22 (MLAEWGACLLLAVALLGPGLQA) form the signal peptide. Residues 23 to 516 (QAMEGVKCGG…VSMVAQDTSD (494 aa)) lie on the Extracellular side of the membrane. Cystine bridges form between Cys30–Cys56, Cys83–Cys106, Cys145–Cys171, Cys198–Cys218, Cys257–Cys283, and Cys314–Cys336. CUB domains lie at 30-143 (CGGV…YQKD), 145-255 (CGGV…YFSG), and 257-373 (CQEV…YIGV). N-linked (GlcNAc...) asparagine glycosylation is present at Asn40. N-linked (GlcNAc...) asparagine glycosylation occurs at Asn267. N-linked (GlcNAc...) asparagine glycosylation is found at Asn377, Asn435, and Asn436. The helical transmembrane segment at 517-537 (IVFLGLCILAGILMVIAIVVL) threads the bilayer. Topologically, residues 538–540 (MLL) are cytoplasmic.

The protein localises to the membrane. This is CUB domain-containing protein 2 (CDCP2) from Homo sapiens (Human).